The primary structure comprises 159 residues: Transcriptional repressor NrdR (159 aa).

The segment at 3-34 is a zinc-finger region; sequence CPFCGSDNTSVKDSRAAEDDTAVRRRRVCESC. An ATP-cone domain is found at 49 to 139; that stretch reads IIVVKRDGKR…VYRDFKDPSD (91 aa).

It belongs to the NrdR family. It depends on Zn(2+) as a cofactor.

Negatively regulates transcription of bacterial ribonucleotide reductase nrd genes and operons by binding to NrdR-boxes. This Hyphomonas neptunium (strain ATCC 15444) protein is Transcriptional repressor NrdR.